Reading from the N-terminus, the 82-residue chain is Cytochrome b559 subunit alpha (82 aa).

A helical transmembrane segment spans residues 21 to 35 (VIHSITIPALFIAGW). Histidine 23 provides a ligand contact to heme.

The protein belongs to the PsbE/PsbF family. Heterodimer of an alpha subunit and a beta subunit. PSII is composed of 1 copy each of membrane proteins PsbA, PsbB, PsbC, PsbD, PsbE, PsbF, PsbH, PsbI, PsbJ, PsbK, PsbL, PsbM, PsbT, PsbX, PsbY, PsbZ, Psb30/Ycf12, peripheral proteins PsbO, CyanoQ (PsbQ), PsbU, PsbV and a large number of cofactors. It forms dimeric complexes. Heme b serves as cofactor.

It localises to the cellular thylakoid membrane. In terms of biological role, this b-type cytochrome is tightly associated with the reaction center of photosystem II (PSII). PSII is a light-driven water:plastoquinone oxidoreductase that uses light energy to abstract electrons from H(2)O, generating O(2) and a proton gradient subsequently used for ATP formation. It consists of a core antenna complex that captures photons, and an electron transfer chain that converts photonic excitation into a charge separation. This chain is Cytochrome b559 subunit alpha, found in Nostoc punctiforme (strain ATCC 29133 / PCC 73102).